We begin with the raw amino-acid sequence, 211 residues long: Protein-L-isoaspartate O-methyltransferase (211 aa).

Residue S60 is part of the active site.

It belongs to the methyltransferase superfamily. L-isoaspartyl/D-aspartyl protein methyltransferase family.

It is found in the cytoplasm. It carries out the reaction [protein]-L-isoaspartate + S-adenosyl-L-methionine = [protein]-L-isoaspartate alpha-methyl ester + S-adenosyl-L-homocysteine. Functionally, catalyzes the methyl esterification of L-isoaspartyl residues in peptides and proteins that result from spontaneous decomposition of normal L-aspartyl and L-asparaginyl residues. It plays a role in the repair and/or degradation of damaged proteins. This Ectopseudomonas mendocina (strain ymp) (Pseudomonas mendocina) protein is Protein-L-isoaspartate O-methyltransferase.